A 413-amino-acid polypeptide reads, in one-letter code: Corticotropin-releasing factor receptor 2 (413 aa).

Residues 1-22 constitute a signal peptide (not cleaved); sequence MDSTIFEIIIDEFDANCSLLDA. At 1–110 the chain is on the extracellular side; sequence MDSTIFEIII…CVPILDNKRK (110 aa). Residue Asn16 is glycosylated (N-linked (GlcNAc...) asparagine). Cystine bridges form between Cys17-Cys53, Cys43-Cys86, and Cys67-Cys101. 3 N-linked (GlcNAc...) asparagine glycosylation sites follow: Asn77, Asn89, and Asn97. The chain crosses the membrane as a helical span at residues 111 to 141; that stretch reads YALHYKIALIINYLGHCISILALVIAFLLFL. At 142-148 the chain is on the cytoplasmic side; it reads CLRSIRC. The helical transmembrane segment at 149–173 threads the bilayer; sequence LRNIIHWNLITTFILRNIMWFLLQM. At 174–187 the chain is on the extracellular side; the sequence is IDHNIHESNEVWCR. Cys186 and Cys256 are joined by a disulfide. The chain crosses the membrane as a helical span at residues 188 to 216; it reads CITTIYNYFVVTNFFWMFVEGCYLHTAIV. Over 217 to 223 the chain is Cytoplasmic; it reads MTYSTDK. The chain crosses the membrane as a helical span at residues 224-251; that stretch reads LRKWVFLFIGWCIPSPIIVTWAICKLFY. Over 252-267 the chain is Extracellular; sequence ENEQCWIGKEPGKYID. Residues 268–293 traverse the membrane as a helical segment; that stretch reads YIYQGRVILVLLINFVFLFNIVRILM. Residues 294-304 are Cytoplasmic-facing; sequence TKLRASTTSET. The chain crosses the membrane as a helical span at residues 305 to 329; the sequence is IQYRKAVKATLVLLPLLGITYMLFF. Residues 330–336 are Extracellular-facing; the sequence is VNPGEDD. A helical transmembrane segment spans residues 337 to 366; the sequence is VSQIVFIYFNSFLQSFQGFFVSVFYCFLNG. At 367-413 the chain is on the cytoplasmic side; the sequence is EVRSAARKRWHRWQDHHSLRVRVARAMSIPTSPTRISFHSIKQTAAV.

The protein belongs to the G-protein coupled receptor 2 family. Post-translationally, a N-glycosylation site within the signal peptide impedes its proper cleavage and function.

Its subcellular location is the cell membrane. In terms of biological role, G-protein coupled receptor for CRH (corticotropin-releasing factor), UCN (urocortin), UCN2 and UCN3. Has high affinity for UCN. Ligand binding causes a conformation change that triggers signaling via guanine nucleotide-binding proteins (G proteins) and down-stream effectors, such as adenylate cyclase. Promotes the activation of adenylate cyclase, leading to increased intracellular cAMP levels. This chain is Corticotropin-releasing factor receptor 2 (crhr2), found in Xenopus laevis (African clawed frog).